Reading from the N-terminus, the 325-residue chain is Malate dehydrogenase (325 aa).

Residue 11–17 (GAAGHVS) participates in NAD(+) binding. Positions 92 and 98 each coordinate substrate. Residues Asn-105, Gln-112, and 129–131 (VGN) contribute to the NAD(+) site. Substrate-binding residues include Asn-131 and Arg-162. Residue His-187 is the Proton acceptor of the active site.

The protein belongs to the LDH/MDH superfamily. MDH type 2 family.

It catalyses the reaction (S)-malate + NAD(+) = oxaloacetate + NADH + H(+). Catalyzes the reversible oxidation of malate to oxaloacetate. This Desulfotalea psychrophila (strain LSv54 / DSM 12343) protein is Malate dehydrogenase.